Reading from the N-terminus, the 150-residue chain is Transcriptional regulator MraZ (150 aa).

SpoVT-AbrB domains are found at residues 8 to 55 (FINN…GISH) and 84 to 127 (AVQL…QPQN).

This sequence belongs to the MraZ family. In terms of assembly, forms oligomers.

The protein resides in the cytoplasm. It localises to the nucleoid. The protein is Transcriptional regulator MraZ of Rickettsia bellii (strain OSU 85-389).